A 429-amino-acid polypeptide reads, in one-letter code: Enolase (429 aa).

Q174 provides a ligand contact to (2R)-2-phosphoglycerate. E218 acts as the Proton donor in catalysis. Residues D254, E295, and D321 each coordinate Mg(2+). (2R)-2-phosphoglycerate contacts are provided by K346, R375, S376, and K397. K346 serves as the catalytic Proton acceptor.

It belongs to the enolase family. It depends on Mg(2+) as a cofactor.

It localises to the cytoplasm. Its subcellular location is the secreted. The protein localises to the cell surface. It catalyses the reaction (2R)-2-phosphoglycerate = phosphoenolpyruvate + H2O. It functions in the pathway carbohydrate degradation; glycolysis; pyruvate from D-glyceraldehyde 3-phosphate: step 4/5. Catalyzes the reversible conversion of 2-phosphoglycerate (2-PG) into phosphoenolpyruvate (PEP). It is essential for the degradation of carbohydrates via glycolysis. The protein is Enolase of Methanosarcina acetivorans (strain ATCC 35395 / DSM 2834 / JCM 12185 / C2A).